We begin with the raw amino-acid sequence, 68 residues long: Venom-like beta-defensin (68 aa).

Residues M1–V24 form the signal peptide. Disulfide bonds link C33–C60, C40–C54, and C47–C61.

Highly expressed in intestine, liver and spleen and expressed at lower levels in brain, kidney, lung, testis and venom gland.

It localises to the secreted. Potent antimicrobial peptide that displays activity against S.aureus and P.aeruginosa. Does not inhibit growth of E.coli. The sequence is that of Venom-like beta-defensin from Ornithorhynchus anatinus (Duckbill platypus).